The chain runs to 156 residues: Small ribosomal subunit protein uS7 (156 aa).

It belongs to the universal ribosomal protein uS7 family. As to quaternary structure, part of the 30S ribosomal subunit. Contacts proteins S9 and S11.

One of the primary rRNA binding proteins, it binds directly to 16S rRNA where it nucleates assembly of the head domain of the 30S subunit. Is located at the subunit interface close to the decoding center, probably blocks exit of the E-site tRNA. The sequence is that of Small ribosomal subunit protein uS7 from Geobacillus thermodenitrificans (strain NG80-2).